The primary structure comprises 622 residues: Sodium-dependent serotonin transporter (622 aa).

The segment at 1–53 is disordered; sequence MDRSGSSDFAGAAATTGRSNPAPWSDDKESPNNEDDSNEDDGDHTTPAKVTDP. Topologically, residues 1-82 are cytoplasmic; that stretch reads MDRSGSSDFA…TRETWGQKAE (82 aa). The span at 32 to 42 shows a compositional bias: acidic residues; that stretch reads NNEDDSNEDDG. A run of 3 helical transmembrane segments spans residues 83-103, 111-130, and 155-175; these read FLLA…FPYI, AFLV…LFYM, and GVGY…NTII. Glycine 89, alanine 91, valine 92, and asparagine 96 together coordinate Na(+). At 176 to 244 the chain is on the extracellular side; the sequence is GWAVYYLFAS…NGLDFMGPVK (69 aa). Cysteines 195 and 204 form a disulfide. A glycan (N-linked (GlcNAc...) asparagine) is linked at asparagine 211. The next 5 helical transmembrane spans lie at 245-263, 272-289, 325-342, 354-375, and 408-427; these read PTLA…FSLW, VVWV…ILLV, IFFS…LSSY, LITS…FSVL, and MSGS…TLGL. Na(+) contacts are provided by serine 328, asparagine 360, leucine 425, aspartate 428, and serine 429. The next 4 membrane-spanning stretches (helical) occupy residues 455 to 473, 489 to 509, 530 to 549, and 568 to 586; these read LFVL…PTMT, GLAI…FYGV, ICWT…FSIM, and VGWA…YIIY. The Cytoplasmic portion of the chain corresponds to 587 to 622; that stretch reads KFFFASKGGCRQRLQESFQPEDNCGSVVPGQQGTSV.

This sequence belongs to the sodium:neurotransmitter symporter (SNF) (TC 2.A.22) family. As to expression, expression is specific to cell bodies in the ventral ganglion of the embryonic and larval nervous system.

The protein resides in the cell membrane. Functionally, terminates the action of serotonin by its high affinity sodium-dependent reuptake into presynaptic terminals. This chain is Sodium-dependent serotonin transporter (SerT), found in Drosophila melanogaster (Fruit fly).